A 250-amino-acid chain; its full sequence is DNA repair protein RecO (250 aa).

The protein belongs to the RecO family.

Its function is as follows. Involved in DNA repair and RecF pathway recombination. This is DNA repair protein RecO from Staphylococcus aureus (strain MW2).